The chain runs to 502 residues: ATP synthase subunit alpha (502 aa).

G169–T176 is a binding site for ATP.

It belongs to the ATPase alpha/beta chains family. As to quaternary structure, F-type ATPases have 2 components, CF(1) - the catalytic core - and CF(0) - the membrane proton channel. CF(1) has five subunits: alpha(3), beta(3), gamma(1), delta(1), epsilon(1). CF(0) has three main subunits: a(1), b(2) and c(9-12). The alpha and beta chains form an alternating ring which encloses part of the gamma chain. CF(1) is attached to CF(0) by a central stalk formed by the gamma and epsilon chains, while a peripheral stalk is formed by the delta and b chains.

The protein resides in the cell membrane. It carries out the reaction ATP + H2O + 4 H(+)(in) = ADP + phosphate + 5 H(+)(out). In terms of biological role, produces ATP from ADP in the presence of a proton gradient across the membrane. The alpha chain is a regulatory subunit. This chain is ATP synthase subunit alpha, found in Desulfitobacterium hafniense (strain Y51).